A 242-amino-acid chain; its full sequence is Ubiquinone/menaquinone biosynthesis C-methyltransferase UbiE (242 aa).

S-adenosyl-L-methionine contacts are provided by residues Thr-69, Asp-87, and 114–115; that span reads NA.

It belongs to the class I-like SAM-binding methyltransferase superfamily. MenG/UbiE family.

The catalysed reaction is a 2-demethylmenaquinol + S-adenosyl-L-methionine = a menaquinol + S-adenosyl-L-homocysteine + H(+). It carries out the reaction a 2-methoxy-6-(all-trans-polyprenyl)benzene-1,4-diol + S-adenosyl-L-methionine = a 5-methoxy-2-methyl-3-(all-trans-polyprenyl)benzene-1,4-diol + S-adenosyl-L-homocysteine + H(+). Its pathway is quinol/quinone metabolism; menaquinone biosynthesis; menaquinol from 1,4-dihydroxy-2-naphthoate: step 2/2. It participates in cofactor biosynthesis; ubiquinone biosynthesis. Functionally, methyltransferase required for the conversion of demethylmenaquinol (DMKH2) to menaquinol (MKH2) and the conversion of 2-polyprenyl-6-methoxy-1,4-benzoquinol (DDMQH2) to 2-polyprenyl-3-methyl-6-methoxy-1,4-benzoquinol (DMQH2). This chain is Ubiquinone/menaquinone biosynthesis C-methyltransferase UbiE, found in Zymomonas mobilis subsp. mobilis (strain ATCC 31821 / ZM4 / CP4).